A 238-amino-acid polypeptide reads, in one-letter code: Ribosomal RNA large subunit methyltransferase E (238 aa).

The S-adenosyl-L-methionine site is built by glycine 76, tryptophan 78, aspartate 99, aspartate 115, and aspartate 139. Residue lysine 179 is the Proton acceptor of the active site.

This sequence belongs to the class I-like SAM-binding methyltransferase superfamily. RNA methyltransferase RlmE family.

It is found in the cytoplasm. It catalyses the reaction uridine(2552) in 23S rRNA + S-adenosyl-L-methionine = 2'-O-methyluridine(2552) in 23S rRNA + S-adenosyl-L-homocysteine + H(+). Functionally, specifically methylates the uridine in position 2552 of 23S rRNA at the 2'-O position of the ribose in the fully assembled 50S ribosomal subunit. This chain is Ribosomal RNA large subunit methyltransferase E, found in Rhodopseudomonas palustris (strain BisB18).